A 345-amino-acid chain; its full sequence is Protein TRIGALACTOSYLDIACYLGLYCEROL 3, chloroplastic (345 aa).

The transit peptide at 1-46 (MLSLSCSSSSSSLLPPSLHYHGSSSVQSIVVPRRSLISFRRKVSCC) directs the protein to the chloroplast. An ABC transporter domain is found at 85–336 (IECRDVYKSF…TNPIVQQFAT (252 aa)). Residue 117–124 (GPSGTGKS) coordinates ATP.

It belongs to the ABC transporter superfamily. ABCI family. In terms of assembly, catalytic subunit of the TGD complex, a lipid translocator at the inner chloroplast envelope membrane made of TGD1, TGD2 and TGD3. Interacts with TGD1 and TGD2 with an overall subunit stoichiometry of 2 TGD1, 2 TGD3 and 8 to 12 TGD2. Interacts with TGD5.

Its subcellular location is the plastid. The protein resides in the chloroplast stroma. In terms of biological role, ATPase transporter involved in lipid transfer from the endoplasmic reticulum (ER) to plastids, and necessary for thylakoids formation. Not involved in transition metal transport pathways. This Arabidopsis thaliana (Mouse-ear cress) protein is Protein TRIGALACTOSYLDIACYLGLYCEROL 3, chloroplastic.